Reading from the N-terminus, the 654-residue chain is Endoplasmic reticulum chaperone BiP (654 aa).

An N-terminal signal peptide occupies residues 1–18 (MKLSLVAAMLLLLSAARA). The segment at 1–80 (MKLSLVAAML…EGERLIGDAA (80 aa)) is required for interaction with ELAPOR1. 36 to 39 (GTTY) contributes to the ATP binding site. Position 86 is a phosphoserine (Ser86). An ATP-binding site is contributed by Lys96. Lys125 is modified (N6-acetyllysine). A nucleotide-binding (NBD) region spans residues 125-280 (KPYIQVDIGG…KKKTGKDVRK (156 aa)). Tyr160 carries the post-translational modification 3'-nitrotyrosine. An N6-acetyllysine modification is found at Lys213. 227-229 (GGT) provides a ligand contact to ATP. Lys271 is subject to N6-acetyllysine. 293-300 (EKAKRALS) contributes to the ATP binding site. Lys326 is subject to N6-acetyllysine. Residue Lys352 forms a Glycyl lysine isopeptide (Lys-Gly) (interchain with G-Cter in SUMO2) linkage. Lys353 carries the post-translational modification N6-acetyllysine; alternate. Lys353 participates in a covalent cross-link: Glycyl lysine isopeptide (Lys-Gly) (interchain with G-Cter in SUMO1); alternate. ATP is bound at residue 364–367 (GSTR). Residues 409-419 (QDTGDLVLLDV) are interdomain linker. Positions 420 to 500 (CPLTLGIETV…PRGVPQIEVT (81 aa)) are substrate-binding (SBD). N6-succinyllysine is present on Lys447. Arg492 bears the Omega-N-methylarginine mark. Thr518 is subject to O-AMP-threonine; alternate. A Phosphothreonine; alternate modification is found at Thr518. Lys585 is subject to N6,N6,N6-trimethyllysine; by METTL21A; in vitro. An N6,N6-dimethyllysine; alternate modification is found at Lys585. N6-methyllysine; alternate is present on Lys585. N6-methyllysine is present on Lys591. Residues 633 to 654 (KLYGSAGPPPTGEEDTAEKDEL) form a disordered region. Phosphothreonine is present on residues Thr643 and Thr648. A compositionally biased stretch (acidic residues) spans 644–654 (GEEDTAEKDEL). The Prevents secretion from ER signature appears at 651 to 654 (KDEL).

Belongs to the heat shock protein 70 family. In terms of assembly, monomer and homooligomer; homooligomerization via the interdomain linker inactivates the chaperone activity and acts as a storage of HSPA5/BiP molecules. Interacts with DNAJC1 (via J domain). Component of an EIF2 complex at least composed of CELF1/CUGBP1, CALR, CALR3, EIF2S1, EIF2S2, HSP90B1 and HSPA5. Part of a large chaperone multiprotein complex comprising DNAJB11, HSP90B1, HSPA5, HYOU, PDIA2, PDIA4, PDIA6, PPIB, SDF2L1, UGGT1 and very small amounts of ERP29, but not, or at very low levels, CALR nor CANX. Interacts with TMEM132A and TRIM21. May form a complex with ERLEC1, OS9, SEL1L and SYVN1. Interacts with DNAJC10. Interacts with DNAJB9/ERdj4; leading to recruit HSPA5/BiP to ERN1/IRE1. Interacts with ERN1/IRE1 (via luminal domain); the interaction takes place following interaction with DNAJB9/ERdj4 and leads to inactivate ERN1/IRE1, the interaction also competitively inhibits ERN1 interaction with MANF. Interacts directly with MANF (via SAP domain); the interaction inhibits ATP binding to HSPA5/BiP and subsequent nucleotide exchange. Interacts with EIF2AK3/PERK (via luminal domain); interaction leads to inactivate EIF2AK3/PERK. Interacts with MX1. Interacts with METTL23. Interacts with CEMIP; the interaction induces calcium leakage from the endoplasmic reticulum and cell migration. Interacts with PCSK4 form; the interaction takes place in the endoplasmic reticulum. Interacts with CIPC. Interacts with CCDC88B (via C-terminus); the interaction opposes ERN1-mediated JNK activation, protecting against apoptosis. Interacts with INPP5K; necessary for INPP5K localization at the endoplasmic reticulum. Interacts with MANF; the interaction is direct. Interacts with LOXL2; leading to activate the ERN1/IRE1-XBP1 pathway of the unfolded protein response. Interacts with CLU under stressed condition; interaction increases CLU protein stability; facilitates its retrotranslocation and redistribution to the mitochondria; cooperatively suppress stress-induced apoptosis by stabilizing mitochondrial membrane integrity. Interacts with CCDC47. Interacts with CLN3. Interacts with ELAPOR1; may regulate the function of HSPA5 in apoptosis and cell proliferation. Interacts with CASP7. Interacts with ILDR2; the interaction stabilizes ILDR2 expression. Interacts with ADAM7. As to quaternary structure, (Microbial infection) Interacts with Japanese encephalitis virus envelope protein E. (Microbial infection) Interacts with R.delemar invasin CotH3 on the surface of nasal epithelial cells. Interacts with R.delemar invasin CotH2. In terms of assembly, (Microbial infection) Interacts with Zika virus envelope protein E and non-structural protein 1 in a chaperone-client manner. In terms of processing, AMPylated by FICD. In unstressed cells, AMPylation at Thr-518 by FICD inactivates the chaperome activity: AMPylated form is locked in a relatively inert state and only weakly stimulated by J domain-containing proteins. In response to endoplasmic reticulum stress, de-AMPylation by the same protein, FICD, restores the chaperone activity.

The protein resides in the endoplasmic reticulum lumen. It localises to the melanosome. The protein localises to the cytoplasm. Its subcellular location is the cell surface. It catalyses the reaction ATP + H2O = ADP + phosphate + H(+). Its activity is regulated as follows. The chaperone activity is regulated by ATP-induced allosteric coupling of the nucleotide-binding (NBD) and substrate-binding (SBD) domains. In the ADP-bound and nucleotide-free (apo) states, the two domains have little interaction. In contrast, in the ATP-bound state the two domains are tightly coupled, which results in drastically accelerated kinetics in both binding and release of polypeptide substrates. J domain-containing co-chaperones (DNAJB9/ERdj4 or DNAJC10/ERdj5) stimulate the ATPase activity and are required for efficient substrate recognition by HSPA5/BiP. Homooligomerization inactivates participating HSPA5/BiP protomers and probably act as reservoirs to store HSPA5/BiP molecules when they are not needed by the cell. Endoplasmic reticulum chaperone that plays a key role in protein folding and quality control in the endoplasmic reticulum lumen. Involved in the correct folding of proteins and degradation of misfolded proteins via its interaction with DNAJC10/ERdj5, probably to facilitate the release of DNAJC10/ERdj5 from its substrate. Acts as a key repressor of the EIF2AK3/PERK and ERN1/IRE1-mediated unfolded protein response (UPR). In the unstressed endoplasmic reticulum, recruited by DNAJB9/ERdj4 to the luminal region of ERN1/IRE1, leading to disrupt the dimerization of ERN1/IRE1, thereby inactivating ERN1/IRE1. Also binds and inactivates EIF2AK3/PERK in unstressed cells. Accumulation of misfolded protein in the endoplasmic reticulum causes release of HSPA5/BiP from ERN1/IRE1 and EIF2AK3/PERK, allowing their homodimerization and subsequent activation. Plays an auxiliary role in post-translational transport of small presecretory proteins across endoplasmic reticulum (ER). May function as an allosteric modulator for SEC61 channel-forming translocon complex, likely cooperating with SEC62 to enable the productive insertion of these precursors into SEC61 channel. Appears to specifically regulate translocation of precursors having inhibitory residues in their mature region that weaken channel gating. May also play a role in apoptosis and cell proliferation. Functionally, (Microbial infection) Plays an important role in viral binding to the host cell membrane and entry for several flaviruses such as Dengue virus, Zika virus and Japanese encephalitis virus. Acts as a component of the cellular receptor for Dengue virus serotype 2/DENV-2 on human liver cells. Its function is as follows. (Microbial infection) Acts as a receptor for CotH proteins expressed by fungi of the order mucorales, the causative agent of mucormycosis, which plays an important role in epithelial cell invasion by the fungi. Acts as a receptor for R.delemar CotH3 in nasal epithelial cells, which may be an early step in rhinoorbital/cerebral mucormycosis (RCM) disease progression. The chain is Endoplasmic reticulum chaperone BiP from Homo sapiens (Human).